We begin with the raw amino-acid sequence, 88 residues long: MATKKGASSSSNGRDSEAKRLGVKRFGGQQVKAGEILIRQRGTKFHPGVNVGRGGDDTLFALKAGAVQFSTKRNRRLVNIVEDEAVEA.

The segment covering 1–13 has biased composition (polar residues); it reads MATKKGASSSSNG. Positions 1–23 are disordered; sequence MATKKGASSSSNGRDSEAKRLGV.

The protein belongs to the bacterial ribosomal protein bL27 family.

This Corynebacterium urealyticum (strain ATCC 43042 / DSM 7109) protein is Large ribosomal subunit protein bL27.